The following is a 178-amino-acid chain: Large ribosomal subunit protein eL20y (178 aa).

This sequence belongs to the eukaryotic ribosomal protein eL20 family.

In Arabidopsis thaliana (Mouse-ear cress), this protein is Large ribosomal subunit protein eL20y (RPL18AB).